The chain runs to 180 residues: Large ribosomal subunit protein uL5 (180 aa).

The protein belongs to the universal ribosomal protein uL5 family. In terms of assembly, part of the 50S ribosomal subunit; part of the 5S rRNA/L5/L18/L25 subcomplex. Contacts the 5S rRNA and the P site tRNA. Forms a bridge to the 30S subunit in the 70S ribosome.

Its function is as follows. This is one of the proteins that bind and probably mediate the attachment of the 5S RNA into the large ribosomal subunit, where it forms part of the central protuberance. In the 70S ribosome it contacts protein S13 of the 30S subunit (bridge B1b), connecting the 2 subunits; this bridge is implicated in subunit movement. Contacts the P site tRNA; the 5S rRNA and some of its associated proteins might help stabilize positioning of ribosome-bound tRNAs. The chain is Large ribosomal subunit protein uL5 from Lactiplantibacillus plantarum (strain ATCC BAA-793 / NCIMB 8826 / WCFS1) (Lactobacillus plantarum).